The sequence spans 300 residues: Protein YIF1B (300 aa).

The disordered stretch occupies residues Met-1 to His-46. Topologically, residues Met-1–Asp-142 are cytoplasmic. The helical transmembrane segment at Leu-143–Thr-163 threads the bilayer. Residues Gln-164–Ser-178 lie on the Extracellular side of the membrane. Residues Ala-179 to Val-199 form a helical membrane-spanning segment. Over Asn-200–Thr-205 the chain is Cytoplasmic. Residues Val-206–Gly-226 traverse the membrane as a helical segment. A topological domain (extracellular) is located at residue Leu-227. The helical transmembrane segment at Leu-228 to Phe-248 threads the bilayer. Topologically, residues Met-249–Tyr-278 are cytoplasmic. Residues Leu-279–Val-299 traverse the membrane as a helical segment. Position 300 (Arg-300) is a topological domain, extracellular.

It belongs to the YIF1 family.

It is found in the endoplasmic reticulum membrane. It localises to the golgi apparatus membrane. The protein localises to the endoplasmic reticulum-Golgi intermediate compartment membrane. Its function is as follows. Functions in endoplasmic reticulum to Golgi vesicle-mediated transport and regulates the proper organization of the endoplasmic reticulum and the Golgi. Plays a key role in targeting to neuronal dendrites receptors such as HTR1A. Plays also a role in primary cilium and sperm flagellum assembly probably through protein transport to these compartments. The sequence is that of Protein YIF1B (yif1b) from Xenopus tropicalis (Western clawed frog).